Reading from the N-terminus, the 402-residue chain is MWRGLGLALALCLLLTGGTESQGQSSYCKQPPPWSIKDQDPMLNSYGSVTVVALLQASUYLCILQASRLEDLRVKLEKEGYSNISYVVVNHQGISSRLKYVHLKNKVSEHIPVYQQEENQPDVWTLLNGNKDDFLIYDRCGRLVYHLGLPYSFLTFTYVEDSIKTVYCEDKCGNCSLKALEDEDVCKNVFLATKEKTAEASQRHHHPHPHSHPHPHPHPHPHPHPHPHHGHQLHENAHLSESPKPDTPDTPENPPPSGLHHHHHRHKGPQRQGHSDNCDTPVGSESLQPSLPQKKLURKRCINQLLUQFPKDSESALSSCCCHCRHLVFEKTGSAITUQCTEKLPSLCSUQGLLAEENVIESUQURLPPAAUQAAGQQLNPTEASTKUSUKNKAKMUKUPSN.

Residues 1–19 (MWRGLGLALALCLLLTGGT) form the signal peptide. Residue Sec59 is a non-standard amino acid, selenocysteine. Asn83 and Asn174 each carry an N-linked (GlcNAc...) asparagine glycan. The segment at 196–291 (KTAEASQRHH…VGSESLQPSL (96 aa)) is disordered. The span at 203 to 231 (RHHHPHPHSHPHPHPHPHPHPHPHPHHGH) shows a compositional bias: basic residues. 13 consecutive repeat copies span residues 204–205 (HH), 206–207 (HP), 208–209 (HP), 210–211 (HS), 212–213 (HP), 214–215 (HP), 216–217 (HP), 218–219 (HP), 220–221 (HP), 222–223 (HP), 224–225 (HP), 226–227 (HP), and 228–229 (HH). Positions 204 to 229 (HHHPHPHSHPHPHPHPHPHPHPHPHH) are 13 X 2 AA tandem repeats of H-[PHS]. Residues 232-247 (QLHENAHLSESPKPDT) show a composition bias toward basic and acidic residues. Positions 259-269 (LHHHHHRHKGP) are enriched in basic residues. Position 284 is a phosphoserine (Ser284). 11 non-standard amino acids (selenocysteine) are found at residues Sec297, Sec307, Sec338, Sec350, Sec363, Sec365, Sec372, Sec388, Sec390, Sec397, and Sec399. The tract at residues 367–402 (LPPAAUQAAGQQLNPTEASTKUSUKNKAKMUKUPSN) is disordered.

It belongs to the selenoprotein P family. In terms of processing, phosphorylation sites are present in the extracellular medium. In terms of tissue distribution, brain and kidney. Most prominently expressed in the cerebellar cortex, hippocampus and olfactory bulb.

It is found in the secreted. Functionally, constitutes a major selenium pool in the brain and may play an important role in developing and/or modulating the morphology of neurons and/or glial cells. The sequence is that of Selenoprotein P from Bos taurus (Bovine).